Consider the following 324-residue polypeptide: Glyoxylate/hydroxypyruvate reductase B (324 aa).

Active-site residues include arginine 237 and glutamate 266. Catalysis depends on histidine 285, which acts as the Proton donor.

Belongs to the D-isomer specific 2-hydroxyacid dehydrogenase family. GhrB subfamily. As to quaternary structure, homodimer.

The protein resides in the cytoplasm. The enzyme catalyses glycolate + NADP(+) = glyoxylate + NADPH + H(+). It carries out the reaction (R)-glycerate + NAD(+) = 3-hydroxypyruvate + NADH + H(+). It catalyses the reaction (R)-glycerate + NADP(+) = 3-hydroxypyruvate + NADPH + H(+). Functionally, catalyzes the NADPH-dependent reduction of glyoxylate and hydroxypyruvate into glycolate and glycerate, respectively. This chain is Glyoxylate/hydroxypyruvate reductase B, found in Cronobacter sakazakii (strain ATCC BAA-894) (Enterobacter sakazakii).